A 125-amino-acid chain; its full sequence is Protein ApaG (125 aa).

An ApaG domain is found at Met-1–His-125.

The sequence is that of Protein ApaG from Citrobacter koseri (strain ATCC BAA-895 / CDC 4225-83 / SGSC4696).